We begin with the raw amino-acid sequence, 270 residues long: Putative phosphoenolpyruvate synthase regulatory protein (270 aa).

An ADP-binding site is contributed by 150–157 (GVSRCGKT).

Belongs to the pyruvate, phosphate/water dikinase regulatory protein family. PSRP subfamily.

The enzyme catalyses [pyruvate, water dikinase] + ADP = [pyruvate, water dikinase]-phosphate + AMP + H(+). It carries out the reaction [pyruvate, water dikinase]-phosphate + phosphate + H(+) = [pyruvate, water dikinase] + diphosphate. In terms of biological role, bifunctional serine/threonine kinase and phosphorylase involved in the regulation of the phosphoenolpyruvate synthase (PEPS) by catalyzing its phosphorylation/dephosphorylation. This is Putative phosphoenolpyruvate synthase regulatory protein from Shewanella baltica (strain OS223).